The sequence spans 1405 residues: Centlein (1405 aa).

The segment covering methionine 1–proline 14 has biased composition (pro residues). The interval methionine 1–leucine 79 is disordered. The residue at position 2 (alanine 2) is an N-acetylalanine. Serine 5 and serine 22 each carry phosphoserine. Basic and acidic residues predominate over residues valine 48 to valine 58. Residues glutamate 61 to glycine 71 show a composition bias toward gly residues. Positions glutamate 95–valine 126 form a coiled coil. Disordered stretches follow at residues lysine 421–histidine 450 and serine 493–glutamine 529. Coiled coils occupy residues asparagine 613–arginine 655 and lysine 681–asparagine 793. Residues tryptophan 865–lysine 917 form a disordered region. Polar residues predominate over residues alanine 877–serine 895. Positions proline 896 to aspartate 907 are enriched in basic and acidic residues. Residues asparagine 980–asparagine 1311 are a coiled coil. Phosphothreonine is present on threonine 1343.

In terms of assembly, interacts with CEP250 and CEP68. Interacts with NEK2; the interaction leads to phosphorylation of CNTLN. In terms of processing, phosphorylated directly or indirectly by NEK2.

It localises to the cytoplasm. The protein resides in the cytoskeleton. It is found in the microtubule organizing center. Its subcellular location is the centrosome. The protein localises to the centriole. Required for centrosome cohesion and recruitment of CEP68 to centrosomes. This chain is Centlein (CNTLN), found in Homo sapiens (Human).